Reading from the N-terminus, the 444-residue chain is Ubiquitin carboxyl-terminal hydrolase MINDY-3 (444 aa).

C51 acts as the Nucleophile in catalysis. Phosphoserine is present on S124. Residue H286 is the Proton acceptor of the active site.

Belongs to the MINDY deubiquitinase family. FAM188 subfamily. Interacts with COPS5.

Its subcellular location is the nucleus. It carries out the reaction Thiol-dependent hydrolysis of ester, thioester, amide, peptide and isopeptide bonds formed by the C-terminal Gly of ubiquitin (a 76-residue protein attached to proteins as an intracellular targeting signal).. Hydrolase that can remove 'Lys-48'-linked conjugated ubiquitin from proteins. This is Ubiquitin carboxyl-terminal hydrolase MINDY-3 from Mus musculus (Mouse).